A 608-amino-acid polypeptide reads, in one-letter code: UvrABC system protein C (608 aa).

Positions 15–93 (HQPGVYRMYN…IKQYLPKYNV (79 aa)) constitute a GIY-YIG domain. The region spanning 203–238 (RQVIQTLVKQMESASQSLNFEKAAIIRDQIQAMRRV) is the UVR domain.

It belongs to the UvrC family. Interacts with UvrB in an incision complex.

It is found in the cytoplasm. In terms of biological role, the UvrABC repair system catalyzes the recognition and processing of DNA lesions. UvrC both incises the 5' and 3' sides of the lesion. The N-terminal half is responsible for the 3' incision and the C-terminal half is responsible for the 5' incision. The protein is UvrABC system protein C of Aliivibrio fischeri (strain ATCC 700601 / ES114) (Vibrio fischeri).